The chain runs to 1392 residues: Protein dispatched homolog 3 (1392 aa).

At 1–73 the chain is on the cytoplasmic side; that stretch reads MDTEDDPLLQ…LGWAFTNPCC (73 aa). The segment at 16-40 is disordered; it reads EEQEEEEATGETFLGAQKPGPQPGA. Residues 74–94 traverse the membrane as a helical segment; it reads AGLVLFLGCSIPMALSAFMFL. The Lumenal portion of the chain corresponds to 95–462; the sequence is YYPPLDIDIS…YEVRRTFNND (368 aa). The interval 162 to 248 is disordered; sequence GNRSRQASRA…HAAVAANQSR (87 aa). Asparagine 163 carries N-linked (GlcNAc...) asparagine glycosylation. The segment covering 190–199 has biased composition (polar residues); it reads SAAQKPTANR. The region spanning 457–615 is the SSD domain; it reads RTFNNDMLLA…LVTMPAALGL (159 aa). Residues 463–483 form a helical membrane-spanning segment; that stretch reads MLLAFISSSCIAALVYILTSC. A topological domain (cytoplasmic) is located at residue serine 484. A helical transmembrane segment spans residues 485–505; it reads VFLSFFGIASIGLSCLVALFL. Residues 506–508 lie on the Lumenal side of the membrane; the sequence is YHV. The helical transmembrane segment at 509–529 threads the bilayer; that stretch reads VFGIQYLGILNGVAAFVIVGI. Topologically, residues 530–573 are cytoplasmic; that stretch reads GVDDVFVFINTYRQATHLEDPQLRMIHTVQTAGKATFFTSLTTA. The chain crosses the membrane as a helical span at residues 574–594; that stretch reads AAYAANVFSQIPAVHDFGLFM. Residue serine 595 is a topological domain, lumenal. A helical membrane pass occupies residues 596–616; the sequence is LIVSCCWLAVLVTMPAALGLW. Residues 617–729 are Cytoplasmic-facing; the sequence is SLYLAPLESS…WVLWSAVKSR (113 aa). Residues 730–750 traverse the membrane as a helical segment; the sequence is WVIVGLFVSILILSLVFASRL. The Lumenal segment spans residues 751 to 1182; sequence RPASRAPLLF…IFMEIVGVQS (432 aa). An N-linked (GlcNAc...) asparagine glycan is attached at asparagine 1021. The chain crosses the membrane as a helical span at residues 1183–1203; that stretch reads ALCGLVLSLLICVAAVAVFTT. Position 1204 (histidine 1204) is a topological domain, cytoplasmic. A helical transmembrane segment spans residues 1205-1225; sequence ILLLLPVLLSILGIVCLVVTI. The Lumenal segment spans residues 1226-1291; it reads MYWSGWEMGA…TLEAVRHVGV (66 aa). The helical transmembrane segment at 1292 to 1312 threads the bilayer; that stretch reads AIVSSALTTVIATVPLFFCII. At 1313–1320 the chain is on the cytoplasmic side; sequence APFAKFGK. Residues 1321 to 1341 form a helical membrane-spanning segment; it reads IVALNTGVSILYTLTVSTALL. Residues 1342-1358 are Lumenal-facing; sequence GIMAPSSFTRTRTSFLK. A helical membrane pass occupies residues 1359–1379; that stretch reads ALGAVLLAGALGLGACLVLLQ. Residues 1380–1392 are Cytoplasmic-facing; the sequence is SGYKIPLPAGASL.

Belongs to the patched family. In terms of tissue distribution, expressed in brain and testis.

It localises to the endoplasmic reticulum membrane. The protein resides in the nucleus membrane. Its subcellular location is the cytoplasmic vesicle membrane. In terms of biological role, plays a role in neuronal proliferation and differentiation. Plays a role in the accumulation of cellular cholesterol. Involved in intracellular lipid droplet formation. May contribute to cholesterol homeostasis in neuronal cells. The chain is Protein dispatched homolog 3 from Homo sapiens (Human).